Reading from the N-terminus, the 361-residue chain is Very-long-chain 3-oxoacyl-CoA reductase (361 aa).

A helical transmembrane segment spans residues P32–F52. NADP(+)-binding residues include V79, D133, N163, R198, Y236, K240, V269, and S271. Residue Y236 is the Proton donor of the active site. Residue K240 is the Lowers pKa of active site Tyr of the active site.

It belongs to the short-chain dehydrogenases/reductases (SDR) family.

The protein localises to the endoplasmic reticulum membrane. It catalyses the reaction a very-long-chain (3R)-3-hydroxyacyl-CoA + NADP(+) = a very-long-chain 3-oxoacyl-CoA + NADPH + H(+). It participates in lipid metabolism; fatty acid biosynthesis. Component of the microsomal membrane bound fatty acid elongation system, which produces the 26-carbon very long-chain fatty acids (VLCFA) from palmitate. Catalyzes the reduction of the 3-ketoacyl-CoA intermediate that is formed in each cycle of fatty acid elongation. VLCFAs serve as precursors for ceramide and sphingolipids. The chain is Very-long-chain 3-oxoacyl-CoA reductase from Cryptococcus neoformans var. neoformans serotype D (strain B-3501A) (Filobasidiella neoformans).